Here is a 218-residue protein sequence, read N- to C-terminus: Thiopurine S-methyltransferase (218 aa).

Positions 10, 45, 66, and 123 each coordinate S-adenosyl-L-methionine.

This sequence belongs to the class I-like SAM-binding methyltransferase superfamily. TPMT family.

Its subcellular location is the cytoplasm. It catalyses the reaction S-adenosyl-L-methionine + a thiopurine = S-adenosyl-L-homocysteine + a thiopurine S-methylether.. This is Thiopurine S-methyltransferase from Shewanella baltica (strain OS185).